We begin with the raw amino-acid sequence, 118 residues long: Phage-like element PBSX protein XkdH (118 aa).

The protein to B.subtilis YqbH.

This chain is Phage-like element PBSX protein XkdH (xkdH), found in Bacillus subtilis (strain 168).